A 316-amino-acid polypeptide reads, in one-letter code: 4-hydroxy-3-methylbut-2-enyl diphosphate reductase (316 aa).

Cysteine 12 is a [4Fe-4S] cluster binding site. The (2E)-4-hydroxy-3-methylbut-2-enyl diphosphate site is built by histidine 41 and histidine 74. Residues histidine 41 and histidine 74 each contribute to the dimethylallyl diphosphate site. Isopentenyl diphosphate contacts are provided by histidine 41 and histidine 74. Cysteine 96 provides a ligand contact to [4Fe-4S] cluster. Residue histidine 124 coordinates (2E)-4-hydroxy-3-methylbut-2-enyl diphosphate. Histidine 124 contributes to the dimethylallyl diphosphate binding site. An isopentenyl diphosphate-binding site is contributed by histidine 124. Glutamate 126 (proton donor) is an active-site residue. Threonine 167 contacts (2E)-4-hydroxy-3-methylbut-2-enyl diphosphate. Residue cysteine 197 coordinates [4Fe-4S] cluster. Residues serine 225, serine 226, asparagine 227, and serine 269 each contribute to the (2E)-4-hydroxy-3-methylbut-2-enyl diphosphate site. Dimethylallyl diphosphate-binding residues include serine 225, serine 226, asparagine 227, and serine 269. 4 residues coordinate isopentenyl diphosphate: serine 225, serine 226, asparagine 227, and serine 269.

This sequence belongs to the IspH family. As to quaternary structure, homodimer. The cofactor is [4Fe-4S] cluster.

It carries out the reaction isopentenyl diphosphate + 2 oxidized [2Fe-2S]-[ferredoxin] + H2O = (2E)-4-hydroxy-3-methylbut-2-enyl diphosphate + 2 reduced [2Fe-2S]-[ferredoxin] + 2 H(+). The enzyme catalyses dimethylallyl diphosphate + 2 oxidized [2Fe-2S]-[ferredoxin] + H2O = (2E)-4-hydroxy-3-methylbut-2-enyl diphosphate + 2 reduced [2Fe-2S]-[ferredoxin] + 2 H(+). It participates in isoprenoid biosynthesis; dimethylallyl diphosphate biosynthesis; dimethylallyl diphosphate from (2E)-4-hydroxy-3-methylbutenyl diphosphate: step 1/1. The protein operates within isoprenoid biosynthesis; isopentenyl diphosphate biosynthesis via DXP pathway; isopentenyl diphosphate from 1-deoxy-D-xylulose 5-phosphate: step 6/6. Its function is as follows. Catalyzes the conversion of 1-hydroxy-2-methyl-2-(E)-butenyl 4-diphosphate (HMBPP) into a mixture of isopentenyl diphosphate (IPP) and dimethylallyl diphosphate (DMAPP). Acts in the terminal step of the DOXP/MEP pathway for isoprenoid precursor biosynthesis. The polypeptide is 4-hydroxy-3-methylbut-2-enyl diphosphate reductase (Escherichia coli (strain ATCC 8739 / DSM 1576 / NBRC 3972 / NCIMB 8545 / WDCM 00012 / Crooks)).